A 142-amino-acid chain; its full sequence is HTH-type transcriptional regulator MntR (142 aa).

Positions 1-63 (MPTPSMEDYI…YEKYRGLVLT (63 aa)) constitute an HTH dtxR-type domain. Mn(2+)-binding residues include D8, E11, H77, E99, E102, and H103.

Belongs to the DtxR/MntR family. Homodimer.

Its subcellular location is the cytoplasm. DNA binding is strongly activated by Mn(2+). Functionally, central regulator of manganese homeostasis. This is HTH-type transcriptional regulator MntR from Bacillus cereus (strain AH820).